Here is a 198-residue protein sequence, read N- to C-terminus: Large ribosomal subunit protein bL25 (198 aa).

Belongs to the bacterial ribosomal protein bL25 family. CTC subfamily. Part of the 50S ribosomal subunit; part of the 5S rRNA/L5/L18/L25 subcomplex. Contacts the 5S rRNA. Binds to the 5S rRNA independently of L5 and L18.

Its function is as follows. This is one of the proteins that binds to the 5S RNA in the ribosome where it forms part of the central protuberance. The polypeptide is Large ribosomal subunit protein bL25 (Pseudomonas putida (strain W619)).